Reading from the N-terminus, the 476-residue chain is Aspartyl/glutamyl-tRNA(Asn/Gln) amidotransferase subunit B (476 aa).

Belongs to the GatB/GatE family. GatB subfamily. As to quaternary structure, heterotrimer of A, B and C subunits.

It carries out the reaction L-glutamyl-tRNA(Gln) + L-glutamine + ATP + H2O = L-glutaminyl-tRNA(Gln) + L-glutamate + ADP + phosphate + H(+). The catalysed reaction is L-aspartyl-tRNA(Asn) + L-glutamine + ATP + H2O = L-asparaginyl-tRNA(Asn) + L-glutamate + ADP + phosphate + 2 H(+). Allows the formation of correctly charged Asn-tRNA(Asn) or Gln-tRNA(Gln) through the transamidation of misacylated Asp-tRNA(Asn) or Glu-tRNA(Gln) in organisms which lack either or both of asparaginyl-tRNA or glutaminyl-tRNA synthetases. The reaction takes place in the presence of glutamine and ATP through an activated phospho-Asp-tRNA(Asn) or phospho-Glu-tRNA(Gln). In Listeria monocytogenes serovar 1/2a (strain ATCC BAA-679 / EGD-e), this protein is Aspartyl/glutamyl-tRNA(Asn/Gln) amidotransferase subunit B.